Reading from the N-terminus, the 666-residue chain is MTVLQKIQSLREELNLHNYNYYVLDNPTISDYDFDVKLTDLQSLEKNNPEYFDENSPTQRVGGTITKNFETLKHDYRMYSLDNSYSKEDLLDWENRIQKALGDVPLEYICELKYDGASISITYENGRLVRAVTRGDGFQGDDVTNNIKTIKAVPIKLKGDFPEKFDIRGEIILPFAGFEKMNQDLIEIGETPYSNPRNTASGSLKLQDSAEVAKRPLDCLLYSLIGNNLPFQSHFEGLEKARLWGFKVPKQSHLAKNMNEVFDFINIWDKNRHTLPYETDGVVIKVNDLHLQDELGYTAKSPRWAIAYKFKSEQVFTQLNSISYQVGRTGSITPVANLEPVQLAGTIVKRASLHNADQIEKLDIRINDTVFVEKGGEIIPKIIGVDLQKRPSNSQKTAYITHCPECQTKLERKEGEANHYCPNFYGCRPQIIGRIQHYISRKAMDIEGLGGETVALLYDNGLVKNYADLYDLSVEQILPLERMAQKSAENLVQGVQNSKNIPFENVLFALGIRYVGETVAKKLAKHYKNIDAIANANLLELVMVDEIGDKIAQSVVEFFDNQENISVLERLKNNGIQLAISEENNTVVSNKLLGKIFVVSGVFEIYSRDELKKAIEDNGGKVGSSISAKTNYVIAGQNMGPAKLEKANQLKVSIISESDFSALLTS.

NAD(+) is bound by residues 31–35, 80–81, and Glu-111; these read DYDFD and SL. Residue Lys-113 is the N6-AMP-lysine intermediate of the active site. 4 residues coordinate NAD(+): Arg-134, Glu-170, Lys-285, and Lys-309. The Zn(2+) site is built by Cys-403, Cys-406, Cys-421, and Cys-427. Positions 587–666 constitute a BRCT domain; sequence VVSNKLLGKI…ESDFSALLTS (80 aa).

This sequence belongs to the NAD-dependent DNA ligase family. LigA subfamily. Mg(2+) serves as cofactor. The cofactor is Mn(2+).

The catalysed reaction is NAD(+) + (deoxyribonucleotide)n-3'-hydroxyl + 5'-phospho-(deoxyribonucleotide)m = (deoxyribonucleotide)n+m + AMP + beta-nicotinamide D-nucleotide.. Its function is as follows. DNA ligase that catalyzes the formation of phosphodiester linkages between 5'-phosphoryl and 3'-hydroxyl groups in double-stranded DNA using NAD as a coenzyme and as the energy source for the reaction. It is essential for DNA replication and repair of damaged DNA. This Flavobacterium psychrophilum (strain ATCC 49511 / DSM 21280 / CIP 103535 / JIP02/86) protein is DNA ligase.